The sequence spans 464 residues: MDHDLEIFPLLSYVLHHSDPASHAPPSLAIQQSLANRYPLLTNPYVISSLIESIPSTITQTLFVFGSLGPRPDPLAVSSARSKIREIKENDSLSPEDAAKEEQVYAAVVSLEEVHEGYEKQLRDLEEEIGRVYASAVESLSGGDEVNEEVLAVIKDAEDGGVVERIDLSDHELKLLPDALGKIVGLVSLNVSRNNLRFLPDTISGLEKLEELDLSSNRLVFLPDSIGLLLNLRILNVTGNKLTLLPESIAQCRSLVELDASFNNLTSLPANFGYGLLNLERLSIQLNKIRFFPNSICEMRSLRYLDAHMNEIHGLPIAIGRLTNLEVMNLSSNFSDLIELPDTISDLANLRELDLSNNQIRVLPDSFFRLEKLEKLNLDQNPLEYPPQEMVNQSAEAVREFMRKRWEEMVEEEQLRSVIEAEKQQGGATGWLSWGSSIVTSLFSGGTHGGAAKKPKNSFLDEQL.

Residues Ala106 to Glu138 adopt a coiled-coil conformation. LRR repeat units lie at residues Gly160–Ile183, Val184–Leu206, Glu207–Leu230, Leu232–Cys252, Ser254–Gly275, Leu276–Met299, Ser301–Leu322, Thr323–Leu347, Ala348–Leu370, and Lys372–Gln393. The GVYW; degenerate signature appears at Val398–Trp406.

This sequence belongs to the SHOC2 family. In terms of tissue distribution, widely expressed.

Leucine-rich repeat protein that likely mediates protein interactions, possibly in the context of signal transduction. The protein is Plant intracellular Ras-group-related LRR protein 3 (PIRL3) of Arabidopsis thaliana (Mouse-ear cress).